Reading from the N-terminus, the 371-residue chain is Cytochrome b (371 aa).

A run of 4 helical transmembrane segments spans residues 25 to 45 (FGSM…FLAV), 69 to 90 (WMMQ…YIHI), 105 to 125 (WMSG…GYVL), and 170 to 190 (FFAL…LHII). Residues His-75 and His-89 each coordinate heme b. Positions 174 and 188 each coordinate heme b. His-193 lines the a ubiquinone pocket. A run of 4 helical transmembrane segments spans residues 218-238 (HKDL…MSFF), 280-300 (LGGA…PFTH), 312-332 (LSQL…WAAT), and 339-358 (FIII…LSFP).

It belongs to the cytochrome b family. As to quaternary structure, the cytochrome bc1 complex contains 3 respiratory subunits (MT-CYB, CYC1 and UQCRFS1), 2 core proteins (UQCRC1 and UQCRC2) and probably 6 low-molecular weight proteins. Heme b is required as a cofactor.

Its subcellular location is the mitochondrion inner membrane. Component of the ubiquinol-cytochrome c reductase complex (complex III or cytochrome b-c1 complex) that is part of the mitochondrial respiratory chain. The b-c1 complex mediates electron transfer from ubiquinol to cytochrome c. Contributes to the generation of a proton gradient across the mitochondrial membrane that is then used for ATP synthesis. The chain is Cytochrome b (MT-CYB) from Apodora papuana (Papuan olive python).